The following is a 457-amino-acid chain: F-box/LRR-repeat protein At2g42730 (457 aa).

Residues 4 to 50 (KDVISRLPDEVLGRILSLISTKEAVSTSVLSKRWKNMFVLVSNLDID) form the F-box domain. LRR repeat units lie at residues 265–288 (MDETRMVGVRNGSLGSIPADMRNL), 292–315 (IRNVRILHLSSHTLELLYFSCKEM), and 318–343 (FDSLVSLSIGNDKARGWQMLPLLIKN).

This Arabidopsis thaliana (Mouse-ear cress) protein is F-box/LRR-repeat protein At2g42730.